Here is a 721-residue protein sequence, read N- to C-terminus: Catalase-peroxidase 1 (721 aa).

A cross-link (tryptophyl-tyrosyl-methioninium (Trp-Tyr) (with M-249)) is located at residues 98–223 (WHAAGSYRVA…LAAVQMGLIY (126 aa)). Catalysis depends on histidine 99, which acts as the Proton acceptor. Residues 223 to 249 (YVNPEGVNGQPDPLRTAQDVRVTFGRM) constitute a cross-link (tryptophyl-tyrosyl-methioninium (Tyr-Met) (with W-98)). A heme b-binding site is contributed by histidine 264.

Belongs to the peroxidase family. Peroxidase/catalase subfamily. Homodimer or homotetramer. Requires heme b as cofactor. In terms of processing, formation of the three residue Trp-Tyr-Met cross-link is important for the catalase, but not the peroxidase activity of the enzyme.

The enzyme catalyses H2O2 + AH2 = A + 2 H2O. It carries out the reaction 2 H2O2 = O2 + 2 H2O. Its function is as follows. Bifunctional enzyme with both catalase and broad-spectrum peroxidase activity. The sequence is that of Catalase-peroxidase 1 from Legionella pneumophila (strain Paris).